The chain runs to 160 residues: Twist-related protein 2 (160 aa).

Residues 1 to 63 form a disordered region; it reads MEEGSSSPVS…GSPSAQSFEE (63 aa). Basic residues predominate over residues 27-37; sequence KRFGRKRRYSK. The bHLH domain maps to 66–117; that stretch reads SQRILANVRERQRTQSLNEAFAALRKIIPTLPSDKLSKIQTLKLAARYIDFL.

As to quaternary structure, efficient DNA binding requires dimerization with another bHLH protein. Forms a heterodimer with TCF3/E12. Also interacts with MEF2C. In terms of tissue distribution, in the embryo, highly expressed in chondrogenic cells. In embryonic skin, expressed in the undifferentiated mesenchymal layer beneath the epidermis which later develops into the dermis. Expressed in early myeloid cells but not in lymphoid cells in the liver. Expression also detected in the secretory ependymal epithelium of the choroid plexus primordium. In the adult, expressed in secreting glandular tissues and tubules.

It localises to the nucleus. It is found in the cytoplasm. Functionally, binds to the E-box consensus sequence 5'-CANNTG-3' as a heterodimer and inhibits transcriptional activation by MYOD1, MYOG, MEF2A and MEF2C. Also represses expression of pro-inflammatory cytokines such as TNFA and IL1B. Involved in postnatal glycogen storage and energy metabolism. Inhibits the premature or ectopic differentiation of preosteoblast cells during osteogenesis, possibly by changing the internal signal transduction response of osteoblasts to external growth factors. The polypeptide is Twist-related protein 2 (TWIST2) (Homo sapiens (Human)).